The primary structure comprises 70 residues: MTKHDHGLKEKVEGTIDKVKGEVKEVVGKVTDNKKLQAEGKWDKVKGTAKDTVGNVKEKVHEYKEHKENK.

It belongs to the UPF0337 (CsbD) family.

The protein is UPF0337 protein BT9727_3385 of Bacillus thuringiensis subsp. konkukian (strain 97-27).